The sequence spans 408 residues: CinA-like protein (408 aa).

The protein belongs to the CinA family.

This chain is CinA-like protein, found in Fervidobacterium nodosum (strain ATCC 35602 / DSM 5306 / Rt17-B1).